The following is a 100-amino-acid chain: uncharacterized protein (100 aa).

A helical membrane pass occupies residues 68–88; sequence VFLFFFTGSSPSFPAALLGLF.

It is found in the membrane. This is an uncharacterized protein from Saccharomyces cerevisiae (strain ATCC 204508 / S288c) (Baker's yeast).